Reading from the N-terminus, the 190-residue chain is Threonylcarbamoyl-AMP synthase (190 aa).

The YrdC-like domain occupies 7 to 190 (TGSIAAAVDL…ALTGELFRQG (184 aa)).

This sequence belongs to the SUA5 family. TsaC subfamily.

The protein localises to the cytoplasm. It carries out the reaction L-threonine + hydrogencarbonate + ATP = L-threonylcarbamoyladenylate + diphosphate + H2O. In terms of biological role, required for the formation of a threonylcarbamoyl group on adenosine at position 37 (t(6)A37) in tRNAs that read codons beginning with adenine. Catalyzes the conversion of L-threonine, HCO(3)(-)/CO(2) and ATP to give threonylcarbamoyl-AMP (TC-AMP) as the acyladenylate intermediate, with the release of diphosphate. This Salmonella choleraesuis (strain SC-B67) protein is Threonylcarbamoyl-AMP synthase.